A 430-amino-acid chain; its full sequence is Tyrosine--tRNA ligase (430 aa).

Tyr-32 contributes to the L-tyrosine binding site. The 'HIGH' region signature appears at 37-46 (PTADSLHIGH). Tyr-172 and Gln-176 together coordinate L-tyrosine. Residues 232-236 (KFGKT) carry the 'KMSKS' region motif. Residue Lys-235 coordinates ATP. Residues 362 to 429 (VKAVDLFVDN…GKKNYFLLIA (68 aa)) enclose the S4 RNA-binding domain.

Belongs to the class-I aminoacyl-tRNA synthetase family. TyrS type 1 subfamily. As to quaternary structure, homodimer.

Its subcellular location is the cytoplasm. The catalysed reaction is tRNA(Tyr) + L-tyrosine + ATP = L-tyrosyl-tRNA(Tyr) + AMP + diphosphate + H(+). Functionally, catalyzes the attachment of tyrosine to tRNA(Tyr) in a two-step reaction: tyrosine is first activated by ATP to form Tyr-AMP and then transferred to the acceptor end of tRNA(Tyr). This chain is Tyrosine--tRNA ligase, found in Bacteroides thetaiotaomicron (strain ATCC 29148 / DSM 2079 / JCM 5827 / CCUG 10774 / NCTC 10582 / VPI-5482 / E50).